The sequence spans 741 residues: T-box transcription factor TBX3 (741 aa).

A DNA-binding region (T-box; first part) is located at residues 107-220 (LEAKELWDQF…NNISDKHGFT (114 aa)). Positions 241-305 (ILNSMHKYQP…NNPFAKGFRD (65 aa)) form a DNA-binding region, T-box; second part. Serine 369 is subject to Phosphoserine. The tract at residues 369–469 (SEAESDAEAE…EGPVATKVDE (101 aa)) is disordered. Composition is skewed to basic and acidic residues over residues 377-386 (AESKEEHGPE) and 420-437 (SRAR…DSRH). Phosphoserine is present on residues serine 432, serine 438, serine 456, serine 705, serine 736, serine 738, and serine 740. Residues 438-447 (SPATISSSTR) show a composition bias toward polar residues.

As to quaternary structure, interacts with PML. In terms of tissue distribution, in adults, highest levels in lung. Also found in brain, heart, kidney, liver and ovary.

It is found in the nucleus. In terms of biological role, transcriptional repressor involved in developmental processes. Binds to the palindromic T site 5'-TTCACACCTAGGTGTGAA-3' DNA sequence, or a half-site, which are present in the regulatory region of several genes. Probably plays a role in limb pattern formation. Required for mammary placode induction, and maintenance of the mammary buds during development. Involved in branching morphogenesis in both developing lungs and adult mammary glands, via negative modulation of target genes; acting redundantly with TBX2. Required, together with TBX2, to maintain cell proliferation in the embryonic lung mesenchyme; perhaps acting downstream of SHH, BMP and TGFbeta signaling. Involved in modulating early inner ear development, acting independently of, and also redundantly with, TBX2 in different subregions of the developing ear. Acts as a negative regulator of PML function in cellular senescence. The chain is T-box transcription factor TBX3 (Tbx3) from Mus musculus (Mouse).